A 400-amino-acid chain; its full sequence is Arrestin, lateral eye (400 aa).

This sequence belongs to the arrestin family. In terms of processing, phosphorylated.

Its function is as follows. Plays an important role in the photoreceptor transduction. The sequence is that of Arrestin, lateral eye from Limulus polyphemus (Atlantic horseshoe crab).